The primary structure comprises 106 residues: Cytochrome c2 (106 aa).

4 residues coordinate heme c: Cys-19, Cys-22, His-23, and Met-84.

It belongs to the cytochrome c family. In terms of processing, binds 1 heme c group covalently per subunit.

This chain is Cytochrome c2, found in Rhodopila globiformis (Rhodopseudomonas globiformis).